Reading from the N-terminus, the 478-residue chain is Cytochrome c-552 (478 aa).

Positions Met1–Ala27 are cleaved as a signal peptide. His91 contacts heme c. The heme site is built by Cys119, Cys122, and Lys123. Residues Cys157, Cys160, His161, Cys206, Cys209, and His210 each contribute to the heme c site. Positions 212, 213, 258, and 260 each coordinate Ca(2+). A substrate-binding site is contributed by Tyr213. His261 serves as a coordination point for substrate. Residues His272, Cys279, Cys282, His283, His298, Cys311, Cys314, His315, and His390 each contribute to the heme c site.

The protein belongs to the cytochrome c-552 family. Ca(2+) serves as cofactor. Heme c is required as a cofactor.

The protein resides in the periplasm. The catalysed reaction is 6 Fe(III)-[cytochrome c] + NH4(+) + 2 H2O = 6 Fe(II)-[cytochrome c] + nitrite + 8 H(+). The protein operates within nitrogen metabolism; nitrate reduction (assimilation). Catalyzes the reduction of nitrite to ammonia, consuming six electrons in the process. The polypeptide is Cytochrome c-552 (Aliivibrio fischeri (strain ATCC 700601 / ES114) (Vibrio fischeri)).